Reading from the N-terminus, the 421-residue chain is Testin (421 aa).

The region spanning 92 to 199 (MILTNPVAAK…GDVKLPREMD (108 aa)) is the PET domain. The segment at 133–164 (EKQPVAGSEGAQYRKKQLAKQLPAHDQDPSKC) is disordered. Residues 155-164 (PAHDQDPSKC) show a composition bias toward basic and acidic residues. 3 LIM zinc-binding domains span residues 234-297 (YSCY…CDSE), 299-359 (PRCA…NHAV), and 362-421 (QGCH…KMMS).

The protein belongs to the prickle / espinas / testin family. As to quaternary structure, interacts via LIM domain 1 with ZYX. Interacts (via LIM domain 3) with ENAH and VASP. Interacts with ALKBH4, talin, actin, alpha-actinin, GRIP1 and PXN. Interacts (via LIM domain 2) with ACTL7A (via N-terminus). Heterodimer with ACTL7A; the heterodimer interacts with ENAH to form a heterotrimer.

It is found in the cytoplasm. Its subcellular location is the cell junction. The protein localises to the focal adhesion. Its function is as follows. Scaffold protein that may play a role in cell adhesion, cell spreading and in the reorganization of the actin cytoskeleton. Plays a role in the regulation of cell proliferation. May act as a tumor suppressor. The chain is Testin (TES) from Canis lupus familiaris (Dog).